The following is an 809-amino-acid chain: Penicillin-binding protein 1A (809 aa).

Residues 1-34 (MSDNTKTNSRNKSVKRTKKVKKKKKFGFFKKLFT) lie on the Cytoplasmic side of the membrane. The chain crosses the membrane as a helical; Signal-anchor for type II membrane protein span at residues 35-55 (ILFCLFILLSVAASGVIFAIV). Residues 56 to 809 (KTSPNLDING…PNNNTTNTNK (754 aa)) are Extracellular-facing. Residues 74–251 (SQLYDDNNNP…PSAYYPFSQN (178 aa)) are transglycosylase. Glutamate 113 (proton donor; for transglycosylase activity) is an active-site residue. Residues 381–664 (AAATLFDYHT…VAEIWGEIMK (284 aa)) form a transpeptidase region. The Acyl-ester intermediate; for transpeptidase activity role is filled by serine 422. The segment at 694–809 (SPSNLSGDDS…PNNNTTNTNK (116 aa)) is disordered.

In the N-terminal section; belongs to the glycosyltransferase 51 family. This sequence in the C-terminal section; belongs to the transpeptidase family.

It is found in the cell membrane. The enzyme catalyses [GlcNAc-(1-&gt;4)-Mur2Ac(oyl-L-Ala-gamma-D-Glu-L-Lys-D-Ala-D-Ala)](n)-di-trans,octa-cis-undecaprenyl diphosphate + beta-D-GlcNAc-(1-&gt;4)-Mur2Ac(oyl-L-Ala-gamma-D-Glu-L-Lys-D-Ala-D-Ala)-di-trans,octa-cis-undecaprenyl diphosphate = [GlcNAc-(1-&gt;4)-Mur2Ac(oyl-L-Ala-gamma-D-Glu-L-Lys-D-Ala-D-Ala)](n+1)-di-trans,octa-cis-undecaprenyl diphosphate + di-trans,octa-cis-undecaprenyl diphosphate + H(+). The catalysed reaction is Preferential cleavage: (Ac)2-L-Lys-D-Ala-|-D-Ala. Also transpeptidation of peptidyl-alanyl moieties that are N-acyl substituents of D-alanine.. The protein operates within cell wall biogenesis; peptidoglycan biosynthesis. Its function is as follows. Cell wall formation. Synthesis of cross-linked peptidoglycan from the lipid intermediates. The enzyme has a penicillin-insensitive transglycosylase N-terminal domain (formation of linear glycan strands) and a penicillin-sensitive transpeptidase C-terminal domain (cross-linking of the peptide subunits). The polypeptide is Penicillin-binding protein 1A (pbpA) (Clostridium acetobutylicum (strain ATCC 824 / DSM 792 / JCM 1419 / IAM 19013 / LMG 5710 / NBRC 13948 / NRRL B-527 / VKM B-1787 / 2291 / W)).